Reading from the N-terminus, the 379-residue chain is Protein RecA (379 aa).

The disordered stretch occupies residues 1–23 (MSVDVKSAQSSKSDSLQVEPRPG). Over residues 7–16 (SAQSSKSDSL) the composition is skewed to polar residues. Residue 84–91 (GPESSGKT) participates in ATP binding.

Belongs to the RecA family.

It localises to the cytoplasm. Functionally, can catalyze the hydrolysis of ATP in the presence of single-stranded DNA, the ATP-dependent uptake of single-stranded DNA by duplex DNA, and the ATP-dependent hybridization of homologous single-stranded DNAs. It interacts with LexA causing its activation and leading to its autocatalytic cleavage. The chain is Protein RecA from Prochlorococcus marinus (strain MIT 9313).